The following is a 294-amino-acid chain: NAD kinase (294 aa).

Aspartate 74 functions as the Proton acceptor in the catalytic mechanism. NAD(+) is bound by residues 74–75 (DG), 148–149 (NE), histidine 159, arginine 176, aspartate 178, 189–194 (TAYSLS), and glutamine 249.

The protein belongs to the NAD kinase family. Requires a divalent metal cation as cofactor.

The protein resides in the cytoplasm. It catalyses the reaction NAD(+) + ATP = ADP + NADP(+) + H(+). Involved in the regulation of the intracellular balance of NAD and NADP, and is a key enzyme in the biosynthesis of NADP. Catalyzes specifically the phosphorylation on 2'-hydroxyl of the adenosine moiety of NAD to yield NADP. In Vibrio vulnificus (strain YJ016), this protein is NAD kinase.